The following is a 178-amino-acid chain: MGAFRFHQYQVVGRALPTEKDVQPKIYRMKLWATNEVRAKSKFWYFLRKLKKVKKSNGQMLAINEIYEKNPTTIKNFGIWLRYQSRTGYHNMYKEYRDTTLNGAVEQMYTEMASRHRVRFPCIQIIKTATVPAKLCKRESTKQFHNSKIKFPLVFRKVRPPSRKLKTTYKANKPNLFM.

It belongs to the eukaryotic ribosomal protein eL20 family.

The polypeptide is Large ribosomal subunit protein eL20y (RPL18AB) (Arabidopsis thaliana (Mouse-ear cress)).